Here is a 498-residue protein sequence, read N- to C-terminus: Tumor necrosis factor receptor superfamily member 8 (498 aa).

The first 18 residues, 1–18 (MSALLTAAGLLFLGMLQA), serve as a signal peptide directing secretion. At 19–287 (FPTDRPLKTT…STGTPFLDPG (269 aa)) the chain is on the extracellular side. TNFR-Cys repeat units follow at residues 68 to 105 (QCAP…PRIC) and 106 to 146 (ECQP…DTIC). 5 cysteine pairs are disulfide-bonded: C69–C81, C84–C97, C87–C105, C107–C121, and C128–C146. The segment at 142–168 (KDTICELPSSGSGPNCSNPGDRKTLTS) is disordered. The span at 149–160 (PSSGSGPNCSNP) shows a compositional bias: low complexity. Residues N156, N183, and N229 are each glycosylated (N-linked (GlcNAc...) asparagine). The disordered stretch occupies residues 204–256 (ELVKVPESSSSKAREPSPDPGNAEKNMTLELPSPGTLPDISTSENSKEPASTA). Over residues 242–256 (DISTSENSKEPASTA) the composition is skewed to polar residues. A helical transmembrane segment spans residues 288–308 (PVLFWVAMVVLLVGSGSFLLC). Over 309-498 (YWKACRRRFQ…DHGPTTVSEK (190 aa)) the chain is Cytoplasmic. Residues 338 to 358 (DSCPTEKLTQPQRSGSVTDPS) show a composition bias toward polar residues. Disordered regions lie at residues 338 to 370 (DSCP…SPPP), 389 to 411 (LDDS…VSTE), and 436 to 498 (EVPE…VSEK). A phosphoserine mark is found at S339 and S353. 3 stretches are compositionally biased toward basic and acidic residues: residues 402–411 (EPPEPRVSTE), 456–465 (EVDHAPHYPE), and 484–498 (EGGK…VSEK).

It belongs to the TNFR8 family. Interacts with TRAF1, TRAF2, TRAF3 and TRAF5. In terms of tissue distribution, detected in thymus and in activated splenocytes.

The protein localises to the cell membrane. Receptor for TNFSF8/CD30L. May play a role in the regulation of cellular growth and transformation of activated lymphoblasts. Regulates gene expression through activation of NF-kappa-B. In Mus musculus (Mouse), this protein is Tumor necrosis factor receptor superfamily member 8.